The sequence spans 1358 residues: Tenascin-R (1358 aa).

An N-terminal signal peptide occupies residues 1–31 (MGADGETVVLKNMLIGINLILLGSMIKPSEC). Residues Thr36 and Thr37 are each glycosylated (O-linked (GalNAc...) threonine). The N-linked (GlcNAc...) asparagine glycan is linked to Asn55. Residues 127 to 157 (CASSAQVLQELLSRIEMLEREVSVLRDQCNA) adopt a coiled-coil conformation. Ser176 carries O-linked (Xyl...) (chondroitin sulfate) serine glycosylation. 2 N-linked (GlcNAc...) asparagine glycosylation sites follow: Asn180 and Asn198. EGF-like domains follow at residues 188 to 199 (CICNEGWFGKNC), 219 to 230 (CICDSEYSGDDC), and 250 to 261 (CVCEEPYTGEDC). Ser271 carries O-linked (Xyl...) (chondroitin sulfate) serine glycosylation. Asn278 is a glycosylation site (N-linked (GlcNAc...) asparagine). Positions 281 to 292 (CLCEEGYVGEDC) constitute an EGF-like 4 domain. Disulfide bonds link Cys292–Cys301, Cys297–Cys312, and Cys314–Cys323. Ser302 is a glycosylation site (O-linked (Xyl...) (chondroitin sulfate) serine). The EGF-like 5 domain occupies 312-323 (CVCEEGYQGPDC). 9 consecutive Fibronectin type-III domains span residues 328–420 (PPED…TPQG), 421–505 (LQFK…TVID), 506–595 (GPTQ…TEID), 596–687 (APKN…TELD), 688–777 (SPRD…FRPI), 778–865 (SHLH…TGID), 866–955 (PPKD…AMDN), 956–1042 (PVDL…TLLD), and 1043–1130 (PPAN…TGGR). Asn392, Asn470, and Asn581 each carry an N-linked (GlcNAc...) asparagine glycan. Ser724 carries the phosphoserine modification. N-linked (GlcNAc...) asparagine glycans are attached at residues Asn791, Asn874, Asn1036, Asn1046, and Asn1261. Residues 1129 to 1344 (GRVFPHPQDC…FVEMKMRPYN (216 aa)) form the Fibrinogen C-terminal domain.

The protein belongs to the tenascin family. Forms oligomers. Interacts with CNTN1, TNC, and FN1. Interacts with BCAN and ACAN in a calcium-dependent manner. Interacts with SCN2B, PTPRZ1, and CSPG3. In terms of processing, contains N-linked oligosaccharides, O-linked sialylated structures and O-linked chondroitin sulfate glycosaminoglycans. Contains N-linked oligosaccharides with a sulfated carbohydrate structure. O-glycosylated on Thr-36 or Thr-37 with a core 1 or possibly core 8 glycan. As to expression, brain specific.

The protein localises to the secreted. The protein resides in the extracellular space. It is found in the extracellular matrix. Its function is as follows. Neural extracellular matrix (ECM) protein involved in interactions with different cells and matrix components. These interactions can influence cellular behavior by either evoking a stable adhesion and differentiation, or repulsion and inhibition of neurite growth. Binding to cell surface gangliosides inhibits RGD-dependent integrin-mediated cell adhesion and results in an inhibition of PTK2/FAK1 (FAK) phosphorylation and cell detachment. Binding to membrane surface sulfatides results in a oligodendrocyte adhesion and differentiation. Interaction with CNTN1 induces a repulsion of neurons and an inhibition of neurite outgrowth. Interacts with SCN2B may play a crucial role in clustering and regulation of activity of sodium channels at nodes of Ranvier. TNR-linked chondroitin sulfate glycosaminoglycans are involved in the interaction with FN1 and mediate inhibition of cell adhesion and neurite outgrowth. The highly regulated addition of sulfated carbohydrate structure may modulate the adhesive properties of TNR over the course of development and during synapse maintenance. The sequence is that of Tenascin-R (TNR) from Homo sapiens (Human).